We begin with the raw amino-acid sequence, 140 residues long: 3-hydroxyacyl-[acyl-carrier-protein] dehydratase FabZ (140 aa).

The active site involves His-47.

It belongs to the thioester dehydratase family. FabZ subfamily.

The protein localises to the cytoplasm. It catalyses the reaction a (3R)-hydroxyacyl-[ACP] = a (2E)-enoyl-[ACP] + H2O. Its function is as follows. Involved in unsaturated fatty acids biosynthesis. Catalyzes the dehydration of short chain beta-hydroxyacyl-ACPs and long chain saturated and unsaturated beta-hydroxyacyl-ACPs. The chain is 3-hydroxyacyl-[acyl-carrier-protein] dehydratase FabZ from Streptococcus sanguinis (strain SK36).